Consider the following 362-residue polypeptide: MAESTATTTAVPPPAEESWNADSEDVHQFYWTYTEEPHKSRRAAILKAHPEIASLNGYEPLTKWIVLGVVSLQFTCAYLLSQSSLLSWKFFLTAYFIGAFCNQNLFLAIHELSHNLGFKKTLYNRAYCLFANLPVGAPFAASFRPYHMEHHAYQGVDGMDTDLPTRAELILFDNVLGKAFFCTFQLLFYAFRPLVVRRLPFTLMHFWNIIVQFSFDYLVVRYVGWRALAYFFMSSFLAGSLHPTAGHFLSEHYNMTRTRLIASGPGKETPLETFSYYGPLNFFVYNAGYHIEHHDFPYVAWTRIGKVRELAPEFYDNIPDCKSWCGIIYQFITDSNVGMWCRVKRKQKHADIPTKSMHLHVS.

Positions 1 to 10 (MAESTATTTA) are enriched in low complexity. A disordered region spans residues 1–20 (MAESTATTTAVPPPAEESWN). A run of 3 helical transmembrane segments spans residues 60–80 (PLTKWIVLGVVSLQFTCAYLL), 90–110 (FFLTAYFIGAFCNQNLFLAIH), and 121–143 (TLYNRAYCLFANLPVGAPFAASF). Positions 110 to 114 (HELSH) match the Histidine box-1 motif. The Histidine box-2 motif lies at 147 to 151 (HMEHH). Helical transmembrane passes span 169 to 189 (LILFDNVLGKAFFCTFQLLFY), 200 to 220 (PFTLMHFWNIIVQFSFDYLVV), and 228 to 248 (LAYFFMSSFLAGSLHPTAGHF). The Histidine box-3 signature appears at 290-294 (HIEHH).

The protein belongs to the fatty acid desaturase type 1 family. DEGS subfamily.

Its subcellular location is the membrane. It carries out the reaction an N-acylsphinganine + 2 Fe(II)-[cytochrome b5] + O2 + 2 H(+) = an N-acylsphing-4-enine + 2 Fe(III)-[cytochrome b5] + 2 H2O. Its pathway is lipid metabolism; sphingolipid metabolism. Functionally, delta(4)-fatty-acid desaturase which introduces a double bond at the 4-position in the long-chain base (LCB) of ceramides. Required for sphingosine biosynthesis. This chain is Sphingolipid delta(4)-desaturase (dsd1), found in Schizosaccharomyces pombe (strain 972 / ATCC 24843) (Fission yeast).